We begin with the raw amino-acid sequence, 146 residues long: MNEELQNQFMALDVYNQQVQKLQEELSNIDLMIMELVRAIESMESLKTSGEIMLPLGAGSFVKADVKNPEKIILSVGVDVLLEKDVEEVILDFKNSLDELEKTKELITTQIQKTSKEVTRIRGELEKRAAAIEKQSQTKRGHSGSN.

It belongs to the prefoldin alpha subunit family. Heterohexamer of two alpha and four beta subunits.

It is found in the cytoplasm. Functionally, molecular chaperone capable of stabilizing a range of proteins. Seems to fulfill an ATP-independent, HSP70-like function in archaeal de novo protein folding. In Methanococcus vannielii (strain ATCC 35089 / DSM 1224 / JCM 13029 / OCM 148 / SB), this protein is Prefoldin subunit alpha.